We begin with the raw amino-acid sequence, 37 residues long: Large ribosomal subunit protein bL36c (37 aa).

The protein belongs to the bacterial ribosomal protein bL36 family.

It is found in the plastid. The protein resides in the chloroplast. The protein is Large ribosomal subunit protein bL36c (rpl36) of Chlamydomonas reinhardtii (Chlamydomonas smithii).